We begin with the raw amino-acid sequence, 520 residues long: Acetylcholine receptor subunit delta (520 aa).

A signal peptide spans 1–24 (MAGPVLTLGLLAALVVCALPGSWG). The Extracellular segment spans residues 25 to 248 (LNEEQRLIQH…VTFYLIIRRK (224 aa)). N100, N167, and N193 each carry an N-linked (GlcNAc...) asparagine glycan. C154 and C168 are oxidised to a cystine. The next 3 helical transmembrane spans lie at 249–273 (PLFYIINILVPCVLISFMINLVFYL), 281–299 (TSVAISVLLAQSVFLLLIS), and 315–336 (FLLFGMVLVTMVVVICVIVLNI). The Cytoplasmic segment spans residues 337-474 (HFRTPSTHVL…WNQVARTVDR (138 aa)). At Y393 the chain carries Phosphotyrosine; by Tyr-kinases. Residues 475 to 493 (LCLFVVTPVMVVGTAWIFL) traverse the membrane as a helical segment.

This sequence belongs to the ligand-gated ion channel (TC 1.A.9) family. Acetylcholine receptor (TC 1.A.9.1) subfamily. Delta/CHRND sub-subfamily. Pentamer of two alpha chains, and one each of the beta, delta, and gamma (in immature muscle) or epsilon (in mature muscle) chains. The muscle heteropentamer composed of alpha-1, beta-1, delta, epsilon subunits interacts with the alpha-conotoxin ImII.

Its subcellular location is the postsynaptic cell membrane. It localises to the cell membrane. The catalysed reaction is K(+)(in) = K(+)(out). It catalyses the reaction Na(+)(in) = Na(+)(out). Its function is as follows. After binding acetylcholine, the AChR responds by an extensive change in conformation that affects all subunits and leads to opening of an ion-conducting channel across the plasma membrane. This is Acetylcholine receptor subunit delta (Chrnd) from Mus musculus (Mouse).